Here is a 97-residue protein sequence, read N- to C-terminus: Co-chaperonin GroES (97 aa).

Belongs to the GroES chaperonin family. As to quaternary structure, heptamer of 7 subunits arranged in a ring. Interacts with the chaperonin GroEL.

It localises to the cytoplasm. Together with the chaperonin GroEL, plays an essential role in assisting protein folding. The GroEL-GroES system forms a nano-cage that allows encapsulation of the non-native substrate proteins and provides a physical environment optimized to promote and accelerate protein folding. GroES binds to the apical surface of the GroEL ring, thereby capping the opening of the GroEL channel. This Yersinia enterocolitica protein is Co-chaperonin GroES.